We begin with the raw amino-acid sequence, 78 residues long: UPF0349 protein YuzB (78 aa).

This sequence belongs to the UPF0349 family.

The chain is UPF0349 protein YuzB (yuzB) from Bacillus subtilis (strain 168).